A 1392-amino-acid chain; its full sequence is ATP-dependent helicase/nuclease subunit A (1392 aa).

The UvrD-like helicase ATP-binding domain occupies 3–489 (NPKWTPAQQA…IDLNQNFRSR (487 aa)). Residue 24–31 (AAAGSGKT) coordinates ATP. 3 disordered regions span residues 291 to 319 (RGSK…KARD), 555 to 594 (KRGA…LEEA), and 1051 to 1126 (GPVQ…LDTK). 2 stretches are compositionally biased toward basic and acidic residues: residues 305-319 (ENSK…KARD) and 567-583 (SPAK…REPE). The region spanning 556–886 (RGAEDAATEV…RFITVHSSKG (331 aa)) is the UvrD-like helicase C-terminal domain. The span at 584-594 (SGDDESSLEEA) shows a compositional bias: acidic residues. Positions 1088–1113 (ASGKTEIPGETKNSEETKTSEDKKNL) are enriched in basic and acidic residues.

This sequence belongs to the helicase family. AddA subfamily. In terms of assembly, heterodimer of AddA and AddB/RexB. It depends on Mg(2+) as a cofactor.

It catalyses the reaction Couples ATP hydrolysis with the unwinding of duplex DNA by translocating in the 3'-5' direction.. The catalysed reaction is ATP + H2O = ADP + phosphate + H(+). Its function is as follows. The heterodimer acts as both an ATP-dependent DNA helicase and an ATP-dependent, dual-direction single-stranded exonuclease. Recognizes the chi site generating a DNA molecule suitable for the initiation of homologous recombination. The AddA nuclease domain is required for chi fragment generation; this subunit has the helicase and 3' -&gt; 5' nuclease activities. In Desulfitobacterium hafniense (strain DSM 10664 / DCB-2), this protein is ATP-dependent helicase/nuclease subunit A.